The primary structure comprises 315 residues: Ribose-phosphate pyrophosphokinase (315 aa).

ATP is bound by residues 37–39 (DGE) and 96–97 (RQ). Mg(2+) contacts are provided by His-131 and Asp-170. Lys-194 is an active-site residue. D-ribose 5-phosphate-binding positions include Arg-196, Asp-220, and 224 to 228 (DTGGT).

Belongs to the ribose-phosphate pyrophosphokinase family. Class I subfamily. As to quaternary structure, homohexamer. Requires Mg(2+) as cofactor.

It is found in the cytoplasm. It carries out the reaction D-ribose 5-phosphate + ATP = 5-phospho-alpha-D-ribose 1-diphosphate + AMP + H(+). The protein operates within metabolic intermediate biosynthesis; 5-phospho-alpha-D-ribose 1-diphosphate biosynthesis; 5-phospho-alpha-D-ribose 1-diphosphate from D-ribose 5-phosphate (route I): step 1/1. In terms of biological role, involved in the biosynthesis of the central metabolite phospho-alpha-D-ribosyl-1-pyrophosphate (PRPP) via the transfer of pyrophosphoryl group from ATP to 1-hydroxyl of ribose-5-phosphate (Rib-5-P). The sequence is that of Ribose-phosphate pyrophosphokinase from Buchnera aphidicola subsp. Schizaphis graminum (strain Sg).